Consider the following 291-residue polypeptide: QVPVVDLSCPDEELVARTVVKASEDWGVFQVVNHGIPTELIQRLQKVGREFFELPEAEKRSCAREAGSVEGYGRRIELDIKKRKGIVDQIYLSTWPPSSVNYRYWPKSPPDYREVNEEYARHVKTLSEKIMEWLSEGLGLGREAIKEVNGCWYVMNINHYPPYPHSDSFNGLEPHTDINGLTLIITNEIPGLQVFKDDHWIEVEYIPSAIIVNIGDQIMMLSNGKYKNVLHKTTVDKEKTRMSWPVLVSPTYDMVVGPLPELTSEDDPPKFKPIAYKDYVHNKITFLKNKS.

One can recognise a Fe2OG dioxygenase domain in the interval Cys151–Pro250. Positions 175, 177, and 231 each coordinate Fe cation.

The protein belongs to the iron/ascorbate-dependent oxidoreductase family. L-ascorbate serves as cofactor. Requires Fe cation as cofactor.

It localises to the cytoplasm. It carries out the reaction a (2R,3R)-dihydroflavonol + 2-oxoglutarate + O2 = a flavonol + succinate + CO2 + H2O. The enzyme catalyses a (2S)-flavan-4-one + 2-oxoglutarate + O2 = a (2R,3R)-dihydroflavonol + succinate + CO2. The protein operates within secondary metabolite biosynthesis; flavonoid biosynthesis. Its function is as follows. Catalyzes the formation of flavonols from dihydroflavonols. It can act on dihydrokaempferol to produce kaempferol, on dihydroquercetin to produce quercitin and on dihydromyricetin to produce myricetin. The polypeptide is Flavonol synthase/flavanone 3-hydroxylase (Matthiola incana (Common stock)).